We begin with the raw amino-acid sequence, 186 residues long: Ribosome maturation factor RimM (186 aa).

A PRC barrel domain is found at 100–182; sequence NEGEYHVSDL…RIEINPPVGL (83 aa).

Belongs to the RimM family. Binds ribosomal protein uS19.

The protein localises to the cytoplasm. Its function is as follows. An accessory protein needed during the final step in the assembly of 30S ribosomal subunit, possibly for assembly of the head region. Essential for efficient processing of 16S rRNA. May be needed both before and after RbfA during the maturation of 16S rRNA. It has affinity for free ribosomal 30S subunits but not for 70S ribosomes. This is Ribosome maturation factor RimM from Rippkaea orientalis (strain PCC 8801 / RF-1) (Cyanothece sp. (strain PCC 8801)).